Consider the following 361-residue polypeptide: Phospho-N-acetylmuramoyl-pentapeptide-transferase (361 aa).

10 helical membrane passes run 28 to 48 (LAII…IKFL), 74 to 94 (TMGG…LADL), 99 to 119 (IWIT…DDYA), 133 to 153 (SKLL…EYLD), 168 to 188 (LSLD…VGSS), 203 to 223 (VPIA…GNLI), 236 to 256 (TGEL…FLWF), 263 to 283 (VFMG…ISVI), 288 to 308 (IVLA…ILQV), and 338 to 358 (KVVI…LSSL).

It belongs to the glycosyltransferase 4 family. MraY subfamily. Mg(2+) is required as a cofactor.

The protein resides in the cell membrane. It carries out the reaction UDP-N-acetyl-alpha-D-muramoyl-L-alanyl-gamma-D-glutamyl-meso-2,6-diaminopimeloyl-D-alanyl-D-alanine + di-trans,octa-cis-undecaprenyl phosphate = di-trans,octa-cis-undecaprenyl diphospho-N-acetyl-alpha-D-muramoyl-L-alanyl-D-glutamyl-meso-2,6-diaminopimeloyl-D-alanyl-D-alanine + UMP. It functions in the pathway cell wall biogenesis; peptidoglycan biosynthesis. In terms of biological role, catalyzes the initial step of the lipid cycle reactions in the biosynthesis of the cell wall peptidoglycan: transfers peptidoglycan precursor phospho-MurNAc-pentapeptide from UDP-MurNAc-pentapeptide onto the lipid carrier undecaprenyl phosphate, yielding undecaprenyl-pyrophosphoryl-MurNAc-pentapeptide, known as lipid I. The protein is Phospho-N-acetylmuramoyl-pentapeptide-transferase of Rickettsia montanensis.